Here is an 821-residue protein sequence, read N- to C-terminus: DNA ligase (821 aa).

Residues 50–54 (DAEYD), 99–100 (SL), and E140 each bind NAD(+). The active-site N6-AMP-lysine intermediate is the K142. Residues R163, E200, K319, and K343 each coordinate NAD(+). Positions 452, 455, 470, and 476 each coordinate Zn(2+). The BRCT domain occupies 742–821 (AAALPLEGKT…AGLQALLAGN (80 aa)).

Belongs to the NAD-dependent DNA ligase family. LigA subfamily. It depends on Mg(2+) as a cofactor. Requires Mn(2+) as cofactor.

It catalyses the reaction NAD(+) + (deoxyribonucleotide)n-3'-hydroxyl + 5'-phospho-(deoxyribonucleotide)m = (deoxyribonucleotide)n+m + AMP + beta-nicotinamide D-nucleotide.. DNA ligase that catalyzes the formation of phosphodiester linkages between 5'-phosphoryl and 3'-hydroxyl groups in double-stranded DNA using NAD as a coenzyme and as the energy source for the reaction. It is essential for DNA replication and repair of damaged DNA. The polypeptide is DNA ligase (Chromobacterium violaceum (strain ATCC 12472 / DSM 30191 / JCM 1249 / CCUG 213 / NBRC 12614 / NCIMB 9131 / NCTC 9757 / MK)).